Consider the following 56-residue polypeptide: Light-harvesting protein B-880 beta chain (56 aa).

At 1-22 the chain is on the cytoplasmic side; it reads AEIDRPVSLSGLTEGEAREFHG. Positions 21 and 39 each coordinate a bacteriochlorophyll. Residues 23–45 traverse the membrane as a helical segment; that stretch reads VFMTSFMVFIAVAIVAHILAWMW. Topologically, residues 46-56 are periplasmic; it reads RPWIPGPEGYA.

This sequence belongs to the antenna complex beta subunit family. The core complex is formed by different alpha and beta chains, binding bacteriochlorophyll molecules, and arranged most probably in tetrameric structures disposed around the reaction center. The non-pigmented gamma chains may constitute additional components.

The protein resides in the cell inner membrane. Functionally, antenna complexes are light-harvesting systems, which transfer the excitation energy to the reaction centers. The protein is Light-harvesting protein B-880 beta chain of Afifella marina (Rhodobium marinum).